Consider the following 316-residue polypeptide: Pantothenate kinase (316 aa).

95–102 (GSVAVGKS) serves as a coordination point for ATP.

This sequence belongs to the prokaryotic pantothenate kinase family.

Its subcellular location is the cytoplasm. It catalyses the reaction (R)-pantothenate + ATP = (R)-4'-phosphopantothenate + ADP + H(+). It participates in cofactor biosynthesis; coenzyme A biosynthesis; CoA from (R)-pantothenate: step 1/5. The sequence is that of Pantothenate kinase from Shigella dysenteriae serotype 1 (strain Sd197).